The following is a 209-amino-acid chain: Uracil phosphoribosyltransferase (209 aa).

5-phospho-alpha-D-ribose 1-diphosphate is bound by residues Arg79, Arg104, and 131–139 (DPMLATGGS). Uracil contacts are provided by residues Ile194 and 199–201 (GDA). Asp200 provides a ligand contact to 5-phospho-alpha-D-ribose 1-diphosphate.

This sequence belongs to the UPRTase family. Mg(2+) serves as cofactor.

It catalyses the reaction UMP + diphosphate = 5-phospho-alpha-D-ribose 1-diphosphate + uracil. The protein operates within pyrimidine metabolism; UMP biosynthesis via salvage pathway; UMP from uracil: step 1/1. With respect to regulation, allosterically activated by GTP. Catalyzes the conversion of uracil and 5-phospho-alpha-D-ribose 1-diphosphate (PRPP) to UMP and diphosphate. In Geobacillus sp. (strain WCH70), this protein is Uracil phosphoribosyltransferase.